A 180-amino-acid chain; its full sequence is Shikimate kinase (180 aa).

Residue 14-19 (GAGKST) coordinates ATP. Mg(2+) is bound at residue S18. Residues D36, R60, and G82 each contribute to the substrate site. ATP is bound at residue R120. Residue R140 coordinates substrate. Residue Q157 participates in ATP binding.

The protein belongs to the shikimate kinase family. Monomer. It depends on Mg(2+) as a cofactor.

The protein resides in the cytoplasm. It catalyses the reaction shikimate + ATP = 3-phosphoshikimate + ADP + H(+). It participates in metabolic intermediate biosynthesis; chorismate biosynthesis; chorismate from D-erythrose 4-phosphate and phosphoenolpyruvate: step 5/7. Functionally, catalyzes the specific phosphorylation of the 3-hydroxyl group of shikimic acid using ATP as a cosubstrate. The chain is Shikimate kinase from Haemophilus influenzae (strain PittGG).